We begin with the raw amino-acid sequence, 315 residues long: Methionine import ATP-binding protein MetN (315 aa).

The ABC transporter domain occupies 2-219; sequence IEIEKVCVDF…PQHAFTQQLV (218 aa). An ATP-binding site is contributed by 16–23; that stretch reads GTSGAGKS.

The protein belongs to the ABC transporter superfamily. Methionine importer (TC 3.A.1.24) family. The complex is composed of two ATP-binding proteins (MetN), two transmembrane proteins (MetI) and a solute-binding protein (MetQ).

The protein resides in the cell inner membrane. The enzyme catalyses L-methionine(out) + ATP + H2O = L-methionine(in) + ADP + phosphate + H(+). The catalysed reaction is D-methionine(out) + ATP + H2O = D-methionine(in) + ADP + phosphate + H(+). Part of the ABC transporter complex MetNIQ involved in methionine import. Responsible for energy coupling to the transport system. The chain is Methionine import ATP-binding protein MetN from Salmonella enteritidis.